Here is a 149-residue protein sequence, read N- to C-terminus: Large ribosomal subunit protein uL15A (149 aa).

The disordered stretch occupies residues 21-40 (RIGKHRKQRGGRGNAGGQHH).

Belongs to the universal ribosomal protein uL15 family. In terms of assembly, component of the large ribosomal subunit.

The protein resides in the cytoplasm. Its subcellular location is the cytosol. It localises to the endoplasmic reticulum. Functionally, component of the large ribosomal subunit. The ribosome is a large ribonucleoprotein complex responsible for the synthesis of proteins in the cell. This chain is Large ribosomal subunit protein uL15A (rpl27a-1), found in Entamoeba histolytica (strain ATCC 30459 / HM-1:IMSS / ABRM).